The sequence spans 199 residues: Ras-related protein Rab-7b (199 aa).

GTP-binding positions include 15–22 (GALGVGKT), 34–40 (FEEYQTT), 63–67 (DTGGQ), 124–127 (NKID), and 154–155 (AK). 2 short sequence motifs (switch) span residues 28-41 (YVHK…QTTL) and 67-82 (QERF…KGSD). Residue Ser-186 is modified to Phosphoserine. S-geranylgeranyl cysteine attachment occurs at residues Cys-198 and Cys-199.

This sequence belongs to the small GTPase superfamily. Rab family.

It is found in the late endosome. The protein resides in the lysosome. It localises to the golgi apparatus. Its subcellular location is the trans-Golgi network. The protein localises to the cytoplasmic vesicle. It is found in the phagosome. The protein resides in the phagosome membrane. Functionally, controls vesicular trafficking from endosomes to the trans-Golgi network (TGN). Acts as a negative regulator of TLR9 signaling and can suppress TLR9-triggered TNFA, IL6, and IFNB production in macrophages by promoting TLR9 lysosomal degradation. Also negatively regulates TLR4 signaling in macrophages by promoting lysosomal degradation of TLR4. Promotes megakaryocytic differentiation by increasing NF-kappa-B-dependent IL6 production and subsequently enhancing the association of STAT3 with GATA1. Not involved in the regulation of the EGF- and EGFR degradation pathway. The chain is Ras-related protein Rab-7b (Rab7b) from Mus musculus (Mouse).